A 387-amino-acid chain; its full sequence is EARP-interacting protein homolog (387 aa).

WD repeat units follow at residues 132 to 172 (SAHG…AKAT), 182 to 222 (KGQL…QIYC), 226 to 266 (AHGQ…EPVK), and 270 to 310 (EHSH…SEPF). Positions 309-337 (PFGHLVDDDDLSDPEENQQEDKGKEPLQD) are disordered. The segment covering 315-326 (DDDDLSDPEENQ) has biased composition (acidic residues). A WD 5 repeat occupies 345–385 (EHEDSVYAVEWSAADPWLFASLSYDGRLVINRVPRALKYRI).

The protein belongs to the WD repeat EIPR1 family.

It localises to the golgi apparatus. Its subcellular location is the trans-Golgi network. May act as a component of endosomal retrieval machinery that is involved in protein transport from early endosomes to either recycling endosomes or the trans-Golgi network. The sequence is that of EARP-interacting protein homolog from Danio rerio (Zebrafish).